Reading from the N-terminus, the 578-residue chain is Transmembrane protein 121B (578 aa).

Disordered regions lie at residues methionine 1–serine 84 and alanine 106–serine 129. Composition is skewed to low complexity over residues proline 8 to serine 17 and glycine 44 to serine 53. The span at arginine 54–serine 67 shows a compositional bias: gly residues. The residue at position 167 (serine 167) is a Phosphoserine. A disordered region spans residues arginine 529–cysteine 557. Positions proline 538–glutamine 549 are enriched in pro residues. Serine 552 carries the post-translational modification Phosphoserine.

The protein belongs to the TMEM121 family. Widely expressed, especially in adult heart, brain, prostate, testes, peripherical blood leukocytes and fetal brain.

The polypeptide is Transmembrane protein 121B (Homo sapiens (Human)).